The chain runs to 298 residues: Probable endonuclease 4 (298 aa).

Zn(2+) is bound by residues His70, His111, Glu146, Asp180, His183, His215, Asp228, His230, and Glu260.

This sequence belongs to the AP endonuclease 2 family. Zn(2+) serves as cofactor.

The catalysed reaction is Endonucleolytic cleavage to 5'-phosphooligonucleotide end-products.. Endonuclease IV plays a role in DNA repair. It cleaves phosphodiester bonds at apurinic or apyrimidinic (AP) sites, generating a 3'-hydroxyl group and a 5'-terminal sugar phosphate. In Halalkalibacterium halodurans (strain ATCC BAA-125 / DSM 18197 / FERM 7344 / JCM 9153 / C-125) (Bacillus halodurans), this protein is Probable endonuclease 4.